Reading from the N-terminus, the 81-residue chain is Photosystem I iron-sulfur center (81 aa).

4Fe-4S ferredoxin-type domains follow at residues 2-31 and 39-68; these read SHSV…MIPW and IASA…VRVY. [4Fe-4S] cluster contacts are provided by Cys-11, Cys-14, Cys-17, Cys-21, Cys-48, Cys-51, Cys-54, and Cys-58.

In terms of assembly, the eukaryotic PSI reaction center is composed of at least 11 subunits. [4Fe-4S] cluster serves as cofactor.

The protein localises to the plastid thylakoid membrane. It carries out the reaction reduced [plastocyanin] + hnu + oxidized [2Fe-2S]-[ferredoxin] = oxidized [plastocyanin] + reduced [2Fe-2S]-[ferredoxin]. In terms of biological role, apoprotein for the two 4Fe-4S centers FA and FB of photosystem I (PSI); essential for photochemical activity. FB is the terminal electron acceptor of PSI, donating electrons to ferredoxin. The C-terminus interacts with PsaA/B/D and helps assemble the protein into the PSI complex. Required for binding of PsaD and PsaE to PSI. PSI is a plastocyanin-ferredoxin oxidoreductase, converting photonic excitation into a charge separation, which transfers an electron from the donor P700 chlorophyll pair to the spectroscopically characterized acceptors A0, A1, FX, FA and FB in turn. This chain is Photosystem I iron-sulfur center, found in Cuscuta obtusiflora (Peruvian dodder).